We begin with the raw amino-acid sequence, 139 residues long: uncharacterized protein (139 aa).

A run of 3 helical transmembrane segments spans residues 38 to 60, 72 to 94, and 114 to 136; these read YFLH…LYVF, FIIL…CAGS, and ITVV…LIVA.

The protein localises to the cell membrane. This is an uncharacterized protein from Treponema pallidum (strain Nichols).